Here is a 345-residue protein sequence, read N- to C-terminus: N-acetyl-gamma-glutamyl-phosphate reductase (345 aa).

Residue Cys-149 is part of the active site.

Belongs to the NAGSA dehydrogenase family. Type 1 subfamily.

Its subcellular location is the cytoplasm. The enzyme catalyses N-acetyl-L-glutamate 5-semialdehyde + phosphate + NADP(+) = N-acetyl-L-glutamyl 5-phosphate + NADPH + H(+). Its pathway is amino-acid biosynthesis; L-arginine biosynthesis; N(2)-acetyl-L-ornithine from L-glutamate: step 3/4. Functionally, catalyzes the NADPH-dependent reduction of N-acetyl-5-glutamyl phosphate to yield N-acetyl-L-glutamate 5-semialdehyde. In Bacillus cereus (strain AH187), this protein is N-acetyl-gamma-glutamyl-phosphate reductase.